A 310-amino-acid polypeptide reads, in one-letter code: Homoserine kinase (310 aa).

Residue 85–95 (PKGLGLGSSGA) participates in ATP binding.

It belongs to the GHMP kinase family. Homoserine kinase subfamily.

Its subcellular location is the cytoplasm. The catalysed reaction is L-homoserine + ATP = O-phospho-L-homoserine + ADP + H(+). Its pathway is amino-acid biosynthesis; L-threonine biosynthesis; L-threonine from L-aspartate: step 4/5. Its function is as follows. Catalyzes the ATP-dependent phosphorylation of L-homoserine to L-homoserine phosphate. This chain is Homoserine kinase, found in Thermoplasma acidophilum (strain ATCC 25905 / DSM 1728 / JCM 9062 / NBRC 15155 / AMRC-C165).